We begin with the raw amino-acid sequence, 235 residues long: BPI fold-containing family A member 2 (235 aa).

An N-terminal signal peptide occupies residues 1–20; that stretch reads MFQLGSLVVLCGLLIGTSES. An intrachain disulfide couples Cys-161 to Cys-204.

This sequence belongs to the BPI/LBP/Plunc superfamily. Plunc family. As to expression, expressed in parotid, submandibular and sublingual glands.

It is found in the secreted. Its function is as follows. Has strong antibacterial activity against P.aeruginosa. The protein is BPI fold-containing family A member 2 (Bpifa2) of Rattus norvegicus (Rat).